Consider the following 263-residue polypeptide: MRILITNDDGINAPGLAVLERIASALSDDVFVVAPESDQSGVAHSLSLSDPLRLRKISDRRFAVKGTPTDCVIMGVRSILIEQKPDLVLSGVNCGQNLAEDVIYSGTVAGAMEGTILGIPSIALSQCYEAGTGGRSGIAWDCAEVHAPGIIKHLLETGIDPDVVINLNFPACPASEVTGLAVTAQGRRDATTIKIDPRQDGRGLPYYWIAFARDTRQPGVGTDLEAVAQKRIALTPLRIDLTDDPTMTRLAQSLPKTLPKVAG.

4 residues coordinate a divalent metal cation: Asp-8, Asp-9, Ser-40, and Asn-93.

The protein belongs to the SurE nucleotidase family. A divalent metal cation serves as cofactor.

The protein localises to the cytoplasm. The enzyme catalyses a ribonucleoside 5'-phosphate + H2O = a ribonucleoside + phosphate. In terms of biological role, nucleotidase that shows phosphatase activity on nucleoside 5'-monophosphates. In Beijerinckia indica subsp. indica (strain ATCC 9039 / DSM 1715 / NCIMB 8712), this protein is 5'-nucleotidase SurE.